Consider the following 410-residue polypeptide: Putative formamidase C869.04 (410 aa).

Belongs to the acetamidase/formamidase family. In terms of assembly, homotrimer.

The protein localises to the cytoplasm. The protein resides in the nucleus. It catalyses the reaction formamide + H2O = formate + NH4(+). Its function is as follows. Hydrolyzes formamide with the production of ammonia which can be used as a source of nitrogen for growth. May also act on acetamide, propanamide and butanamide. The polypeptide is Putative formamidase C869.04 (Schizosaccharomyces pombe (strain 972 / ATCC 24843) (Fission yeast)).